We begin with the raw amino-acid sequence, 621 residues long: MTIIYFILAALALGILVLIHELGHLVVAKAVGMAVESFSIGFGPALFKKRIGGIEYRIGCIPFGGYVRIRGMERTKEKGEKGKIDSVYDIPQGFFSKSPWKRILVLVAGPLANILLAVLAFSILYMNGGRSKNYSDCSKVVGWVHPVLQAEGLLPGDEILTCNGKPYVGDKDMLTTSLLEGHLNLEIKRPGYLTVPSKEFAIDVEFDPTKFGVPCSGASYLLYGNQVPLTKNSPMENSELRPNDRFVWMDGTLLFSMAQISQILNESYAFVKVARNDKIFFSRQPRVLASVLHYTPYLRNELIDTQYEAGLKGKWSSLYTLPYVINSYGYIEGELTAIDPESPLPQPQERLQLGDRILAIDGTPVSGSVDILRLVQNHRVSIIVQQMSPQELEEVNSRDADKRFIASYHSEDLLQILNHLGESHPVEVAGPYRLLDPVQPRPWIDVYSSESLDKQLEVAKKIKNKDKQRYYLERLDAEKQKPSLGISLKDLKVRYNPSPVVMLSNITKESLITLKALVTGHLSPQWLSGPVGIVQVLHTGWSVGFSEVLFWIGLISMNLAVLNLLPIPVLDGGYILLCLWEIVTRRRLNMKIVERILVPFTFLLIIFFIFLTFQDLFRFFG.

His20 serves as a coordination point for Zn(2+). Residue Glu21 is part of the active site. His24 is a Zn(2+) binding site. 3 helical membrane passes run 103-125 (ILVLVAGPLANILLAVLAFSILY), 561-583 (VLNLLPIPVLDGGYILLCLWEIV), and 596-613 (ILVPFTFLLIIFFIFLTF).

Belongs to the peptidase M50B family. It depends on Zn(2+) as a cofactor.

The protein resides in the cell inner membrane. In Chlamydia pneumoniae (Chlamydophila pneumoniae), this protein is Putative zinc metalloprotease CPn_0344/CP_0416/CPj0344/CpB0350.